A 341-amino-acid chain; its full sequence is tRNA N6-adenosine threonylcarbamoyltransferase (341 aa).

His-118 and His-122 together coordinate Fe cation. Substrate is bound by residues 141–145 (LVSGG), Asp-174, Gly-187, and Asn-281. Fe cation is bound at residue Asp-309.

This sequence belongs to the KAE1 / TsaD family. It depends on Fe(2+) as a cofactor.

It is found in the cytoplasm. The catalysed reaction is L-threonylcarbamoyladenylate + adenosine(37) in tRNA = N(6)-L-threonylcarbamoyladenosine(37) in tRNA + AMP + H(+). Its function is as follows. Required for the formation of a threonylcarbamoyl group on adenosine at position 37 (t(6)A37) in tRNAs that read codons beginning with adenine. Is involved in the transfer of the threonylcarbamoyl moiety of threonylcarbamoyl-AMP (TC-AMP) to the N6 group of A37, together with TsaE and TsaB. TsaD likely plays a direct catalytic role in this reaction. In Desulfitobacterium hafniense (strain Y51), this protein is tRNA N6-adenosine threonylcarbamoyltransferase.